The sequence spans 866 residues: Replication factor C small subunit (866 aa).

The DOD-type homing endonuclease domain occupies W183–I313.

Belongs to the activator 1 small subunits family. RfcS subfamily. In terms of assembly, heteromultimer composed of small subunits (RfcS) and large subunits (RfcL). In terms of processing, this protein undergoes a protein self splicing that involves a post-translational excision of the intervening region (intein) followed by peptide ligation.

Functionally, part of the RFC clamp loader complex which loads the PCNA sliding clamp onto DNA. The sequence is that of Replication factor C small subunit (rfcS) from Thermococcus kodakarensis (strain ATCC BAA-918 / JCM 12380 / KOD1) (Pyrococcus kodakaraensis (strain KOD1)).